The primary structure comprises 343 residues: Glyceraldehyde-3-phosphate dehydrogenase 1 (343 aa).

NAD(+) is bound by residues 13–14 (RI), D35, R79, and S121. D-glyceraldehyde 3-phosphate is bound by residues 154-156 (SCT), T185, 214-215 (TG), and R237. C155 functions as the Nucleophile in the catalytic mechanism. N319 is a binding site for NAD(+).

It belongs to the glyceraldehyde-3-phosphate dehydrogenase family. In terms of assembly, homotetramer.

It is found in the cytoplasm. It catalyses the reaction D-glyceraldehyde 3-phosphate + phosphate + NAD(+) = (2R)-3-phospho-glyceroyl phosphate + NADH + H(+). It participates in carbohydrate degradation; glycolysis; pyruvate from D-glyceraldehyde 3-phosphate: step 1/5. Catalyzes the oxidative phosphorylation of glyceraldehyde 3-phosphate (G3P) to 1,3-bisphosphoglycerate (BPG) using the cofactor NAD. The first reaction step involves the formation of a hemiacetal intermediate between G3P and a cysteine residue, and this hemiacetal intermediate is then oxidized to a thioester, with concomitant reduction of NAD to NADH. The reduced NADH is then exchanged with the second NAD, and the thioester is attacked by a nucleophilic inorganic phosphate to produce BPG. In Nostoc sp. (strain PCC 7120 / SAG 25.82 / UTEX 2576), this protein is Glyceraldehyde-3-phosphate dehydrogenase 1 (gap1).